Reading from the N-terminus, the 394-residue chain is Elongation factor Tu 1 (394 aa).

In terms of domain architecture, tr-type G spans 10–204; that stretch reads KPHVNVGTIG…ALDTYIPEPE (195 aa). The interval 19–26 is G1; it reads GHVDHGKT. Residue 19–26 coordinates GTP; the sequence is GHVDHGKT. Position 26 (threonine 26) interacts with Mg(2+). The G2 stretch occupies residues 60 to 64; sequence GITIS. The segment at 81–84 is G3; sequence DCPG. Residues 81-85 and 136-139 contribute to the GTP site; these read DCPGH and NKCD. The interval 136-139 is G4; that stretch reads NKCD. The segment at 174–176 is G5; it reads SAL.

Belongs to the TRAFAC class translation factor GTPase superfamily. Classic translation factor GTPase family. EF-Tu/EF-1A subfamily. Monomer.

It is found in the cytoplasm. It catalyses the reaction GTP + H2O = GDP + phosphate + H(+). Functionally, GTP hydrolase that promotes the GTP-dependent binding of aminoacyl-tRNA to the A-site of ribosomes during protein biosynthesis. This Vibrio vulnificus (strain CMCP6) protein is Elongation factor Tu 1.